A 447-amino-acid polypeptide reads, in one-letter code: Probable glycine dehydrogenase (decarboxylating) subunit 1 (447 aa).

The protein belongs to the GcvP family. N-terminal subunit subfamily. In terms of assembly, the glycine cleavage system is composed of four proteins: P, T, L and H. In this organism, the P 'protein' is a heterodimer of two subunits.

The catalysed reaction is N(6)-[(R)-lipoyl]-L-lysyl-[glycine-cleavage complex H protein] + glycine + H(+) = N(6)-[(R)-S(8)-aminomethyldihydrolipoyl]-L-lysyl-[glycine-cleavage complex H protein] + CO2. Functionally, the glycine cleavage system catalyzes the degradation of glycine. The P protein binds the alpha-amino group of glycine through its pyridoxal phosphate cofactor; CO(2) is released and the remaining methylamine moiety is then transferred to the lipoamide cofactor of the H protein. This Maricaulis maris (strain MCS10) (Caulobacter maris) protein is Probable glycine dehydrogenase (decarboxylating) subunit 1.